We begin with the raw amino-acid sequence, 235 residues long: NifU-like protein 2, chloroplastic (235 aa).

The N-terminal 16 residues, 1–16, are a transit peptide targeting the chloroplast; it reads MQLLTLNPAAISRTPP.

The protein belongs to the NifU family. As to quaternary structure, homodimer; disulfide-linked. [2Fe-2S] cluster is required as a cofactor. In terms of tissue distribution, predominantly expressed in leaves and floral stalks. Ubiquitous (at protein level).

The protein resides in the plastid. It localises to the chloroplast stroma. Molecular scaffold for [Fe-S] cluster assembly of chloroplastic iron-sulfur proteins. Required for biogenesis of ferredoxin, a major photosynthetic electron carrier containing [2Fe-2S] cluster. Required for the assembly of photosystem I complex. The protein is NifU-like protein 2, chloroplastic (NIFU2) of Arabidopsis thaliana (Mouse-ear cress).